An 82-amino-acid chain; its full sequence is Mu-conotoxin MrVIB (82 aa).

Residues 1–22 (MKLTCMMIVAVLFLTAWTLVMA) form the signal peptide. A propeptide spanning residues 23-49 (DDSNNGLANHFLKSRDEMEDPEASKLE) is cleaved from the precursor. 3 disulfides stabilise this stretch: C53–C71, C60–C76, and C70–C81.

The protein belongs to the conotoxin O1 superfamily. In terms of tissue distribution, expressed by the venom duct.

It localises to the secreted. Its function is as follows. MuO-conotoxins are gating-modifier toxins that inhibit sodium current by trapping the domain II voltage sensor in the closed position to prevent opening of the sodium channel. This toxin has a preference for Nav1.4/SCN4A over Nav1.2/SCN2A sodium channels. It blocks Nav channels by interacting mainly with the C-terminal part of the pore loop of domain-3. It also blocks fast-inactivating calcium current. Blocks Nav1.8/SCN10A sodium channels and has potent and long-lasting local anesthetic effects. It can also block propagation of action potentials in A- and C-fibers in sciatic nerve as well as skeletal muscle in isolated preparations. In Conus marmoreus (Marble cone), this protein is Mu-conotoxin MrVIB.